A 1440-amino-acid chain; its full sequence is Gag-Pol polyprotein (1440 aa).

Glycine 2 carries the N-myristoyl glycine; by host lipid modification. The interval 7–31 is interaction with Gp41; sequence VLSGGKLDAWEKIRLRPGGKKKYRL. An interaction with host CALM1 region spans residues 8-43; the sequence is LSGGKLDAWEKIRLRPGGKKKYRLKHLVWASRELER. The interaction with host AP3D1 stretch occupies residues 12–19; that stretch reads KLDAWEKI. An interaction with membrane phosphatidylinositol 4,5-bisphosphate and RNA region spans residues 14-33; the sequence is DAWEKIRLRPGGKKKYRLKH. The short motif at 16–22 is the Nuclear export signal element; the sequence is WEKIRLR. A Nuclear localization signal motif is present at residues 26-32; the sequence is KKKYRLK. The interaction with membrane phosphatidylinositol 4,5-bisphosphate stretch occupies residues 73–77; sequence EEIKS. The residue at position 138 (tyrosine 138) is a Phosphotyrosine; by host. The interaction with human PPIA/CYPA and NUP153 stretch occupies residues 195 to 233; it reads NIVGGHQAAMQMLKDTINEEAADWDRVHPVHAGPIPPGQ. The dimerization/Multimerization of capsid protein p24 stretch occupies residues 283–369; sequence YSPVSILDIR…GGPSHKARVL (87 aa). 2 consecutive CCHC-type zinc fingers follow at residues 396–413 and 417–434; these read IKCF…NCRA and KGCW…DCTE. Residues 494 to 498 are dimerization of protease; that stretch reads PQITL. A Peptidase A2 domain is found at 513–582; the sequence is KEALLDTGAD…TPVNIIGRNM (70 aa). The For protease activity; shared with dimeric partner role is filled by aspartate 518. Dimerization of protease stretches follow at residues 542–548 and 581–593; these read GIGGFIK and NMLT…LNFP. The 191-residue stretch at 636-826 folds into the Reverse transcriptase domain; that stretch reads EGKILKIGPE…PPFLWMGYEL (191 aa). Residues aspartate 702, aspartate 777, and aspartate 778 each contribute to the Mg(2+) site. An RT 'primer grip' region spans residues 819–827; that stretch reads FLWMGYELH. The Tryptophan repeat motif signature appears at 990–1006; sequence WEAWWTEYWQATWIPEW. An RNase H type-1 domain is found at 1026-1149; sequence IVGAETFYVD…VDKLVSSGIR (124 aa). Mg(2+)-binding residues include aspartate 1035, glutamate 1070, aspartate 1090, and aspartate 1141. The Integrase-type zinc-finger motif lies at 1155-1196; it reads DGIDKAQEEHEKYHSNWRAMASDFNLPPIVAKEIVASCDKCQ. Histidine 1164, histidine 1168, cysteine 1192, and cysteine 1195 together coordinate Zn(2+). The 151-residue stretch at 1206–1356 folds into the Integrase catalytic domain; that stretch reads VDCSPGIWQL…SAGERIIDMI (151 aa). Mg(2+) contacts are provided by aspartate 1216, aspartate 1268, and glutamate 1304. A DNA-binding region (integrase-type) is located at residues 1375–1422; it reads FRVYYRDNRDPIWKGPAKLLWKGEGAVVIQDNSDIKVVPRRKAKIIRD.

Homotrimer; further assembles as hexamers of trimers. Interacts with gp41 (via C-terminus). Interacts with host CALM1; this interaction induces a conformational change in the Matrix protein, triggering exposure of the myristate group. Interacts with host AP3D1; this interaction allows the polyprotein trafficking to multivesicular bodies during virus assembly. Part of the pre-integration complex (PIC) which is composed of viral genome, matrix protein, Vpr and integrase. As to quaternary structure, homodimer; the homodimer further multimerizes as homohexamers or homopentamers. Interacts with human PPIA/CYPA; This interaction stabilizes the capsid. Interacts with human NUP153. Interacts with host PDZD8; this interaction stabilizes the capsid. Interacts with monkey TRIM5; this interaction destabilizes the capsid. In terms of assembly, homodimer, whose active site consists of two apposed aspartic acid residues. Heterodimer of p66 RT and p51 RT (RT p66/p51). Heterodimerization of RT is essential for DNA polymerase activity. The overall folding of the subdomains is similar in p66 RT and p51 RT but the spatial arrangements of the subdomains are dramatically different. As to quaternary structure, homotetramer; may further associate as a homohexadecamer. Part of the pre-integration complex (PIC) which is composed of viral genome, matrix protein, Vpr and integrase. Interacts with human SMARCB1/INI1 and human PSIP1/LEDGF isoform 1. Interacts with human KPNA3; this interaction might play a role in nuclear import of the pre-integration complex. Interacts with human NUP153; this interaction might play a role in nuclear import of the pre-integration complex. The cofactor is Mg(2+). Post-translationally, specific enzymatic cleavages by the viral protease yield mature proteins. The protease is released by autocatalytic cleavage. The polyprotein is cleaved during and after budding, this process is termed maturation. Proteolytic cleavage of p66 RT removes the RNase H domain to yield the p51 RT subunit. Nucleocapsid protein p7 might be further cleaved after virus entry. In terms of processing, tyrosine phosphorylated presumably in the virion by a host kinase. Phosphorylation is apparently not a major regulator of membrane association. Phosphorylated possibly by host MAPK1; this phosphorylation is necessary for Pin1-mediated virion uncoating. Post-translationally, methylated by host PRMT6, impairing its function by reducing RNA annealing and the initiation of reverse transcription.

It is found in the host cell membrane. The protein localises to the host endosome. The protein resides in the host multivesicular body. It localises to the virion membrane. Its subcellular location is the host nucleus. It is found in the host cytoplasm. The protein localises to the virion. It carries out the reaction Specific for a P1 residue that is hydrophobic, and P1' variable, but often Pro.. It catalyses the reaction Endohydrolysis of RNA in RNA/DNA hybrids. Three different cleavage modes: 1. sequence-specific internal cleavage of RNA. Human immunodeficiency virus type 1 and Moloney murine leukemia virus enzymes prefer to cleave the RNA strand one nucleotide away from the RNA-DNA junction. 2. RNA 5'-end directed cleavage 13-19 nucleotides from the RNA end. 3. DNA 3'-end directed cleavage 15-20 nucleotides away from the primer terminus.. The catalysed reaction is 3'-end directed exonucleolytic cleavage of viral RNA-DNA hybrid.. The enzyme catalyses DNA(n) + a 2'-deoxyribonucleoside 5'-triphosphate = DNA(n+1) + diphosphate. Protease: The viral protease is inhibited by many synthetic protease inhibitors (PIs), such as amprenavir, atazanavir, indinavir, loprinavir, nelfinavir, ritonavir and saquinavir. Use of protease inhibitors in tritherapy regimens permit more ambitious therapeutic strategies. Reverse transcriptase/ribonuclease H: RT can be inhibited either by nucleoside RT inhibitors (NRTIs) or by non nucleoside RT inhibitors (NNRTIs). NRTIs act as chain terminators, whereas NNRTIs inhibit DNA polymerization by binding a small hydrophobic pocket near the RT active site and inducing an allosteric change in this region. Classical NRTIs are abacavir, adefovir (PMEA), didanosine (ddI), lamivudine (3TC), stavudine (d4T), tenofovir (PMPA), zalcitabine (ddC), and zidovudine (AZT). Classical NNRTIs are atevirdine (BHAP U-87201E), delavirdine, efavirenz (DMP-266), emivirine (I-EBU), and nevirapine (BI-RG-587). The tritherapies used as a basic effective treatment of AIDS associate two NRTIs and one NNRTI. Its function is as follows. Mediates, with Gag polyprotein, the essential events in virion assembly, including binding the plasma membrane, making the protein-protein interactions necessary to create spherical particles, recruiting the viral Env proteins, and packaging the genomic RNA via direct interactions with the RNA packaging sequence (Psi). Gag-Pol polyprotein may regulate its own translation, by the binding genomic RNA in the 5'-UTR. At low concentration, the polyprotein would promote translation, whereas at high concentration, the polyprotein would encapsidate genomic RNA and then shut off translation. Targets the polyprotein to the plasma membrane via a multipartite membrane-binding signal, that includes its myristoylated N-terminus. Matrix protein is part of the pre-integration complex. Implicated in the release from host cell mediated by Vpu. Binds to RNA. In terms of biological role, forms the conical core that encapsulates the genomic RNA-nucleocapsid complex in the virion. Most core are conical, with only 7% tubular. The core is constituted by capsid protein hexamer subunits. The core is disassembled soon after virion entry. Host restriction factors such as TRIM5-alpha or TRIMCyp bind retroviral capsids and cause premature capsid disassembly, leading to blocks in reverse transcription. Capsid restriction by TRIM5 is one of the factors which restricts HIV-1 to the human species. Host PIN1 apparently facilitates the virion uncoating. On the other hand, interactions with PDZD8 or CYPA stabilize the capsid. Functionally, encapsulates and protects viral dimeric unspliced genomic RNA (gRNA). Binds these RNAs through its zinc fingers. Acts as a nucleic acid chaperone which is involved in rearangement of nucleic acid secondary structure during gRNA retrotranscription. Also facilitates template switch leading to recombination. As part of the polyprotein, participates in gRNA dimerization, packaging, tRNA incorporation and virion assembly. Its function is as follows. Aspartyl protease that mediates proteolytic cleavages of Gag and Gag-Pol polyproteins during or shortly after the release of the virion from the plasma membrane. Cleavages take place as an ordered, step-wise cascade to yield mature proteins. This process is called maturation. Displays maximal activity during the budding process just prior to particle release from the cell. Also cleaves Nef and Vif, probably concomitantly with viral structural proteins on maturation of virus particles. Hydrolyzes host EIF4GI and PABP1 in order to shut off the capped cellular mRNA translation. The resulting inhibition of cellular protein synthesis serves to ensure maximal viral gene expression and to evade host immune response. Also mediates cleavage of host YTHDF3. Mediates cleavage of host CARD8, thereby activating the CARD8 inflammasome, leading to the clearance of latent HIV-1 in patient CD4(+) T-cells after viral reactivation; in contrast, HIV-1 can evade CARD8-sensing when its protease remains inactive in infected cells prior to viral budding. Multifunctional enzyme that converts the viral RNA genome into dsDNA in the cytoplasm, shortly after virus entry into the cell. This enzyme displays a DNA polymerase activity that can copy either DNA or RNA templates, and a ribonuclease H (RNase H) activity that cleaves the RNA strand of RNA-DNA heteroduplexes in a partially processive 3' to 5' endonucleasic mode. Conversion of viral genomic RNA into dsDNA requires many steps. A tRNA(3)-Lys binds to the primer-binding site (PBS) situated at the 5'-end of the viral RNA. RT uses the 3' end of the tRNA primer to perform a short round of RNA-dependent minus-strand DNA synthesis. The reading proceeds through the U5 region and ends after the repeated (R) region which is present at both ends of viral RNA. The portion of the RNA-DNA heteroduplex is digested by the RNase H, resulting in a ssDNA product attached to the tRNA primer. This ssDNA/tRNA hybridizes with the identical R region situated at the 3' end of viral RNA. This template exchange, known as minus-strand DNA strong stop transfer, can be either intra- or intermolecular. RT uses the 3' end of this newly synthesized short ssDNA to perform the RNA-dependent minus-strand DNA synthesis of the whole template. RNase H digests the RNA template except for two polypurine tracts (PPTs) situated at the 5'-end and near the center of the genome. It is not clear if both polymerase and RNase H activities are simultaneous. RNase H probably can proceed both in a polymerase-dependent (RNA cut into small fragments by the same RT performing DNA synthesis) and a polymerase-independent mode (cleavage of remaining RNA fragments by free RTs). Secondly, RT performs DNA-directed plus-strand DNA synthesis using the PPTs that have not been removed by RNase H as primers. PPTs and tRNA primers are then removed by RNase H. The 3' and 5' ssDNA PBS regions hybridize to form a circular dsDNA intermediate. Strand displacement synthesis by RT to the PBS and PPT ends produces a blunt ended, linear dsDNA copy of the viral genome that includes long terminal repeats (LTRs) at both ends. In terms of biological role, catalyzes viral DNA integration into the host chromosome, by performing a series of DNA cutting and joining reactions. This enzyme activity takes place after virion entry into a cell and reverse transcription of the RNA genome in dsDNA. The first step in the integration process is 3' processing. This step requires a complex comprising the viral genome, matrix protein, Vpr and integrase. This complex is called the pre-integration complex (PIC). The integrase protein removes 2 nucleotides from each 3' end of the viral DNA, leaving recessed CA OH's at the 3' ends. In the second step, the PIC enters cell nucleus. This process is mediated through integrase and Vpr proteins, and allows the virus to infect a non dividing cell. This ability to enter the nucleus is specific of lentiviruses, other retroviruses cannot and rely on cell division to access cell chromosomes. In the third step, termed strand transfer, the integrase protein joins the previously processed 3' ends to the 5' ends of strands of target cellular DNA at the site of integration. The 5'-ends are produced by integrase-catalyzed staggered cuts, 5 bp apart. A Y-shaped, gapped, recombination intermediate results, with the 5'-ends of the viral DNA strands and the 3' ends of target DNA strands remaining unjoined, flanking a gap of 5 bp. The last step is viral DNA integration into host chromosome. This involves host DNA repair synthesis in which the 5 bp gaps between the unjoined strands are filled in and then ligated. Since this process occurs at both cuts flanking the HIV genome, a 5 bp duplication of host DNA is produced at the ends of HIV-1 integration. Alternatively, Integrase may catalyze the excision of viral DNA just after strand transfer, this is termed disintegration. In Human immunodeficiency virus type 1 group M subtype A (isolate MAL) (HIV-1), this protein is Gag-Pol polyprotein (gag-pol).